The sequence spans 208 residues: F-box/kelch-repeat protein At2g43270 (208 aa).

In terms of domain architecture, F-box spans 1–44 (MIYVVPDLLEEIFLGLPLKSILRFKTVSKQWRSILESKSFAERR). The Kelch repeat unit spans residues 149–200 (RDKFNGSYKVVRMCFSPVEKCEVLDVETGEWSELNPPPNDIDVGRKSVCVNG).

The polypeptide is F-box/kelch-repeat protein At2g43270 (Arabidopsis thaliana (Mouse-ear cress)).